The sequence spans 132 residues: Small ribosomal subunit protein uS8c (132 aa).

The protein belongs to the universal ribosomal protein uS8 family. Part of the 30S ribosomal subunit.

Its subcellular location is the plastid. It localises to the chloroplast. In terms of biological role, one of the primary rRNA binding proteins, it binds directly to 16S rRNA central domain where it helps coordinate assembly of the platform of the 30S subunit. The sequence is that of Small ribosomal subunit protein uS8c (rps8) from Nymphaea alba (White water-lily).